A 333-amino-acid polypeptide reads, in one-letter code: tRNA N6-adenosine threonylcarbamoyltransferase (333 aa).

H111 and H115 together coordinate Fe cation. Substrate is bound by residues 134–138, D167, G180, and N272; that span reads LVSGG. Residue D300 coordinates Fe cation.

This sequence belongs to the KAE1 / TsaD family. Requires Fe(2+) as cofactor.

The protein resides in the cytoplasm. The catalysed reaction is L-threonylcarbamoyladenylate + adenosine(37) in tRNA = N(6)-L-threonylcarbamoyladenosine(37) in tRNA + AMP + H(+). Functionally, required for the formation of a threonylcarbamoyl group on adenosine at position 37 (t(6)A37) in tRNAs that read codons beginning with adenine. Is involved in the transfer of the threonylcarbamoyl moiety of threonylcarbamoyl-AMP (TC-AMP) to the N6 group of A37, together with TsaE and TsaB. TsaD likely plays a direct catalytic role in this reaction. The chain is tRNA N6-adenosine threonylcarbamoyltransferase from Hamiltonella defensa subsp. Acyrthosiphon pisum (strain 5AT).